The primary structure comprises 107 residues: Thiosulfate sulfurtransferase GlpE (107 aa).

Positions 17 to 105 (RQGEAVLVDI…WLKAFPLETE (89 aa)) constitute a Rhodanese domain. Cys-65 serves as the catalytic Cysteine persulfide intermediate.

It belongs to the GlpE family.

The protein localises to the cytoplasm. It catalyses the reaction thiosulfate + hydrogen cyanide = thiocyanate + sulfite + 2 H(+). The catalysed reaction is thiosulfate + [thioredoxin]-dithiol = [thioredoxin]-disulfide + hydrogen sulfide + sulfite + 2 H(+). In terms of biological role, transferase that catalyzes the transfer of sulfur from thiosulfate to thiophilic acceptors such as cyanide or dithiols. May function in a CysM-independent thiosulfate assimilation pathway by catalyzing the conversion of thiosulfate to sulfite, which can then be used for L-cysteine biosynthesis. This is Thiosulfate sulfurtransferase GlpE from Sodalis glossinidius (strain morsitans).